Here is a 185-residue protein sequence, read N- to C-terminus: NEDD8-conjugating enzyme UBE2F (185 aa).

An N-acetylmethionine modification is found at M1. The 154-residue stretch at 32-185 folds into the UBC core domain; that stretch reads VRDKLLVKEV…VDEYIKRYAR (154 aa). The active-site Glycyl thioester intermediate is the C116.

It belongs to the ubiquitin-conjugating enzyme family. UBE2F subfamily. Interacts with UBA3 and RBX2. Interacts (N-terminally acetylated form) with (via DCUN1 domain) DCUN1D1, DCUN1D2, DCUN1D3, DCUN1D4 and DCUN1D5. Post-translationally, the acetylation of Met-1 increases affinity for DCUN1D3 by about 2 orders of magnitude and is crucial for NEDD8 transfer to cullins.

It catalyses the reaction [E1 NEDD8-activating enzyme]-S-[NEDD8 protein]-yl-L-cysteine + [E2 NEDD8-conjugating enzyme]-L-cysteine = [E1 NEDD8-activating enzyme]-L-cysteine + [E2 NEDD8-conjugating enzyme]-S-[NEDD8-protein]-yl-L-cysteine.. The protein operates within protein modification; protein neddylation. In terms of biological role, accepts the ubiquitin-like protein NEDD8 from the UBA3-NAE1 E1 complex and catalyzes its covalent attachment to other proteins. Together with the E3 ubiquitin ligase RNF7/RBX2, specifically neddylates cullin-5 (CUL5). Does not neddylate CUL1, CUL2, CUL3, CUL4A or CUL4B. Mediates neddylation of the CUL9-RBX1 complex. The polypeptide is NEDD8-conjugating enzyme UBE2F (Ube2f) (Rattus norvegicus (Rat)).